The sequence spans 373 residues: Histone-lysine N-methyltransferase SETD7 (373 aa).

A disordered region spans residues 1–20 (MDSDDDNMEEVVEGPLDEDD). 3 MORN repeats span residues 36 to 58 (FEGHFVHGEKNGKGKFFFFDGST), 59 to 81 (LEGFYVDDALQGQGVYTYEDGGA), and 106 to 128 (FRGRYKDNIRYGMCWVYYPDGAC). The SET domain maps to 214-336 (QRVYVGQSLI…KDEELTVAYG (123 aa)). S-adenosyl-L-methionine is bound by residues 226–228 (AGE), N296, and H297.

This sequence belongs to the class V-like SAM-binding methyltransferase superfamily. Histone-lysine methyltransferase family. SET7 subfamily.

Its subcellular location is the nucleus. The protein resides in the chromosome. The catalysed reaction is L-lysyl(4)-[histone H3] + S-adenosyl-L-methionine = N(6)-methyl-L-lysyl(4)-[histone H3] + S-adenosyl-L-homocysteine + H(+). It carries out the reaction L-lysyl-[protein] + S-adenosyl-L-methionine = N(6)-methyl-L-lysyl-[protein] + S-adenosyl-L-homocysteine + H(+). Its function is as follows. Histone methyltransferase that specifically monomethylates 'Lys-4' of histone H3. H3 'Lys-4' methylation represents a specific tag for epigenetic transcriptional activation. Plays a central role in the transcriptional activation of genes. Also has methyltransferase activity toward non-histone proteins. This is Histone-lysine N-methyltransferase SETD7 (setd7) from Danio rerio (Zebrafish).